The sequence spans 246 residues: Bis(5'-nucleosyl)-tetraphosphatase PrpE [asymmetrical] (246 aa).

This sequence belongs to the PrpE family. Ni(2+) is required as a cofactor.

It carries out the reaction P(1),P(4)-bis(5'-guanosyl) tetraphosphate + H2O = GMP + GTP + 2 H(+). Asymmetrically hydrolyzes Ap4p to yield AMP and ATP. In Halalkalibacterium halodurans (strain ATCC BAA-125 / DSM 18197 / FERM 7344 / JCM 9153 / C-125) (Bacillus halodurans), this protein is Bis(5'-nucleosyl)-tetraphosphatase PrpE [asymmetrical].